Reading from the N-terminus, the 49-residue chain is Small ribosomal subunit protein eS31 (49 aa).

Cysteine 21, cysteine 24, cysteine 39, and cysteine 42 together coordinate Zn(2+). A C4-type zinc finger spans residues 21–42 (CPRCGPGVFLADHKNRLACGKC).

It belongs to the eukaryotic ribosomal protein eS31 family. As to quaternary structure, part of the 30S ribosomal subunit. Zn(2+) serves as cofactor.

In Methanosarcina mazei (strain ATCC BAA-159 / DSM 3647 / Goe1 / Go1 / JCM 11833 / OCM 88) (Methanosarcina frisia), this protein is Small ribosomal subunit protein eS31.